Consider the following 168-residue polypeptide: Variant surface antigen D (168 aa).

An N-terminal signal peptide occupies residues 1 to 29 (MKKSIFSKKLLVSFGSLVTLAAIPLIAIS). Cysteine 30 carries the N-palmitoyl cysteine lipid modification. Residue cysteine 30 is the site of S-diacylglycerol cysteine attachment. The interval 33-168 (TNTDQSQQPG…STSTSNMNTR (136 aa)) is disordered. Composition is skewed to low complexity over residues 35–44 (TDQSQQPGSG) and 52–71 (GTTT…ESGT). Residues 72 to 81 (TTGGQTGTTT) are compositionally biased toward gly residues. Tandem repeats lie at residues 81-92 (TGGQSDSTSTSK), 93-104 (EQGSSDSTSTSK), 105-116 (EQGSSDSTSTSK), 117-128 (EQGSSDSTSTSK), 129-140 (EQGSSDSTSTSK), 141-152 (EQGSSDSTSTSK), and 153-164 (EQGSSDSTSTSN). Residues 81–164 (TGGQSDSTST…GSSDSTSTSN (84 aa)) form a 7 X 12 AA tandem repeats region. Residues 82–168 (GGQSDSTSTS…STSTSNMNTR (87 aa)) show a composition bias toward low complexity.

It localises to the cell membrane. In terms of biological role, responsible for the antigenic diversity for host adaptation. Expression in E.coli of a construct containing vlpD, vlpE, and vlpF yields antigenically distinguishable products corresponding to each gene. The sequence is that of Variant surface antigen D (vlpD) from Mesomycoplasma hyorhinis (Mycoplasma hyorhinis).